The chain runs to 276 residues: MALSVNTNQPALIALQNLNRTNDDMQAVQTRINTGEAISTAKDTAAVWSHRPGAGDMSGLAREDEPGSGDIDRGRGPRAGESVSDLLKLMREKVVAAKDTSLTTTSRQALNADFQGLIKNLNQVLRSATFDGANLLDGSQAADMSFLADADAGQAITLTLQNLSLGGTINTLTATDDILDPVNAAGVLTRLDATLSAVNQAVGNIGTQAKQIDAHNTFVAKLNDVLETGVGNLVDADLAKESARLQALQVKQPLGAQALSIANGAPQIILSLFKGG.

Positions 51 to 80 are disordered; the sequence is RPGAGDMSGLAREDEPGSGDIDRGRGPRAG. Over residues 61-75 the composition is skewed to basic and acidic residues; that stretch reads AREDEPGSGDIDRGR.

The protein belongs to the bacterial flagellin family. In C.crescentus, the flagellar filament is composed of multiple flagellins of 29 kDa; 27 kDa and 25 kDa.

Its subcellular location is the secreted. It localises to the bacterial flagellum. In terms of biological role, flagellin is the subunit protein which polymerizes to form the filaments of bacterial flagella. This is Flagellin FljJ (fljJ) from Caulobacter vibrioides (strain ATCC 19089 / CIP 103742 / CB 15) (Caulobacter crescentus).